We begin with the raw amino-acid sequence, 312 residues long: Malate dehydrogenase (312 aa).

NAD(+) contacts are provided by residues 7-13 (GAAGGIG) and aspartate 34. Residues arginine 81 and arginine 87 each coordinate substrate. NAD(+) contacts are provided by residues asparagine 94 and 117-119 (ITN). Residues asparagine 119 and arginine 153 each contribute to the substrate site. Histidine 177 (proton acceptor) is an active-site residue. Methionine 227 contacts NAD(+).

The protein belongs to the LDH/MDH superfamily. MDH type 1 family. In terms of assembly, homodimer.

It catalyses the reaction (S)-malate + NAD(+) = oxaloacetate + NADH + H(+). Its function is as follows. Catalyzes the reversible oxidation of malate to oxaloacetate. The sequence is that of Malate dehydrogenase from Escherichia coli (strain SE11).